Reading from the N-terminus, the 122-residue chain is MIQMQTRLNVADNSGAKEVMCVKVLGGSKRRVASIGDVIVVSIKEALPNAKVKKGDVAKAVVVRTVAKLRRPDGSYIRFDDNSAVLINASKEPIGTRIFGPVARELRAKSFVKIVSLAPEVL.

Belongs to the universal ribosomal protein uL14 family. Part of the 50S ribosomal subunit. Forms a cluster with proteins L3 and L19. In the 70S ribosome, L14 and L19 interact and together make contacts with the 16S rRNA in bridges B5 and B8.

Its function is as follows. Binds to 23S rRNA. Forms part of two intersubunit bridges in the 70S ribosome. The polypeptide is Large ribosomal subunit protein uL14 (Bdellovibrio bacteriovorus (strain ATCC 15356 / DSM 50701 / NCIMB 9529 / HD100)).